A 300-amino-acid chain; its full sequence is tRNA U34 carboxymethyltransferase (300 aa).

Residues Lys73, Trp87, Lys92, Gly111, 133 to 135 (DPS), 160 to 161 (VE), Tyr180, and Arg293 each bind carboxy-S-adenosyl-L-methionine.

Belongs to the class I-like SAM-binding methyltransferase superfamily. CmoB family. As to quaternary structure, homotetramer.

It catalyses the reaction carboxy-S-adenosyl-L-methionine + 5-hydroxyuridine(34) in tRNA = 5-carboxymethoxyuridine(34) in tRNA + S-adenosyl-L-homocysteine + H(+). In terms of biological role, catalyzes carboxymethyl transfer from carboxy-S-adenosyl-L-methionine (Cx-SAM) to 5-hydroxyuridine (ho5U) to form 5-carboxymethoxyuridine (cmo5U) at position 34 in tRNAs. The polypeptide is tRNA U34 carboxymethyltransferase (Nautilia profundicola (strain ATCC BAA-1463 / DSM 18972 / AmH)).